The sequence spans 106 residues: Large ribosomal subunit protein uL24 (106 aa).

Belongs to the universal ribosomal protein uL24 family. In terms of assembly, part of the 50S ribosomal subunit.

Functionally, one of two assembly initiator proteins, it binds directly to the 5'-end of the 23S rRNA, where it nucleates assembly of the 50S subunit. In terms of biological role, one of the proteins that surrounds the polypeptide exit tunnel on the outside of the subunit. The sequence is that of Large ribosomal subunit protein uL24 from Thermosipho africanus (strain TCF52B).